The following is a 430-amino-acid chain: Aspartate aminotransferase, mitochondrial (430 aa).

The N-terminal 29 residues, 1-29 (MALLHSARVLSGVASAFHPGLAAAASARA), are a transit peptide targeting the mitochondrion. Position 48 is a phosphothreonine (Thr48). N6-acetyllysine is present on Lys59. Residue Gly65 participates in substrate binding. An N6-acetyllysine; alternate modification is found at Lys73. The residue at position 73 (Lys73) is an N6-succinyllysine; alternate. Lys82 carries the post-translational modification N6-acetyllysine. An N6-acetyllysine; alternate modification is found at Lys90. Position 90 is an N6-succinyllysine; alternate (Lys90). 3'-nitrotyrosine; alternate is present on Tyr96. The residue at position 96 (Tyr96) is a Phosphotyrosine; alternate. Position 122 is an N6-acetyllysine; alternate (Lys122). An N6-succinyllysine; alternate modification is found at Lys122. Ser143 bears the Phosphoserine mark. Lys159 carries the N6-acetyllysine; alternate modification. Residue Lys159 is modified to N6-succinyllysine; alternate. Trp162 contacts substrate. Lys185 carries the post-translational modification N6-acetyllysine; alternate. Lys185 is modified (N6-succinyllysine; alternate). Residue Asn215 participates in substrate binding. At Lys227 the chain carries N6-succinyllysine. Lys234 carries the N6-acetyllysine modification. Lys279 and Lys296 each carry N6-acetyllysine; alternate. Position 279 is an N6-(pyridoxal phosphate)lysine; alternate (Lys279). N6-succinyllysine; alternate is present on Lys296. An N6-acetyllysine modification is found at Lys302. N6-acetyllysine; alternate is present on Lys309. Position 309 is an N6-succinyllysine; alternate (Lys309). Asymmetric dimethylarginine is present on Arg313. Residue Lys338 is modified to N6-acetyllysine; alternate. The residue at position 338 (Lys338) is an N6-succinyllysine; alternate. An N6-acetyllysine modification is found at Lys345. Residue Lys363 is modified to N6-acetyllysine; alternate. Lys363 bears the N6-succinyllysine; alternate mark. 2 positions are modified to N6-acetyllysine: Lys364 and Lys387. N6-acetyllysine; alternate is present on residues Lys396 and Lys404. 2 positions are modified to N6-succinyllysine; alternate: Lys396 and Lys404. Arg407 contacts substrate.

The protein belongs to the class-I pyridoxal-phosphate-dependent aminotransferase family. Homodimer. Requires pyridoxal 5'-phosphate as cofactor.

Its subcellular location is the mitochondrion matrix. The protein localises to the cell membrane. It catalyses the reaction L-aspartate + 2-oxoglutarate = oxaloacetate + L-glutamate. It carries out the reaction L-kynurenine + 2-oxoglutarate = kynurenate + L-glutamate + H2O. Its function is as follows. Catalyzes the irreversible transamination of the L-tryptophan metabolite L-kynurenine to form kynurenic acid (KA). As a member of the malate-aspartate shuttle, it has a key role in the intracellular NAD(H) redox balance. Is important for metabolite exchange between mitochondria and cytosol, and for amino acid metabolism. Facilitates cellular uptake of long-chain free fatty acids. The chain is Aspartate aminotransferase, mitochondrial (GOT2) from Oryctolagus cuniculus (Rabbit).